A 129-amino-acid chain; its full sequence is Sulfurtransferase TusD (129 aa).

The Cysteine persulfide intermediate role is filled by C79.

The protein belongs to the DsrE/TusD family. In terms of assembly, heterohexamer, formed by a dimer of trimers. The hexameric TusBCD complex contains 2 copies each of TusB, TusC and TusD. The TusBCD complex interacts with TusE.

The protein localises to the cytoplasm. Part of a sulfur-relay system required for 2-thiolation of 5-methylaminomethyl-2-thiouridine (mnm(5)s(2)U) at tRNA wobble positions. Accepts sulfur from TusA and transfers it in turn to TusE. The chain is Sulfurtransferase TusD from Pectobacterium atrosepticum (strain SCRI 1043 / ATCC BAA-672) (Erwinia carotovora subsp. atroseptica).